The chain runs to 544 residues: Chaperonin GroEL (544 aa).

Residues 30–33 (TLGP), K51, 87–91 (DGTTT), G415, 479–481 (NAA), and D495 contribute to the ATP site. The span at 525 to 537 (PQDTPATAAAPDM) shows a compositional bias: low complexity. Residues 525-544 (PQDTPATAAAPDMGGMGGMM) form a disordered region.

This sequence belongs to the chaperonin (HSP60) family. Forms a cylinder of 14 subunits composed of two heptameric rings stacked back-to-back. Interacts with the co-chaperonin GroES.

It localises to the cytoplasm. The catalysed reaction is ATP + H2O + a folded polypeptide = ADP + phosphate + an unfolded polypeptide.. In terms of biological role, together with its co-chaperonin GroES, plays an essential role in assisting protein folding. The GroEL-GroES system forms a nano-cage that allows encapsulation of the non-native substrate proteins and provides a physical environment optimized to promote and accelerate protein folding. This Ruthia magnifica subsp. Calyptogena magnifica protein is Chaperonin GroEL.